A 213-amino-acid chain; its full sequence is 3-isopropylmalate dehydratase small subunit (213 aa).

The protein belongs to the LeuD family. LeuD type 1 subfamily. As to quaternary structure, heterodimer of LeuC and LeuD.

It carries out the reaction (2R,3S)-3-isopropylmalate = (2S)-2-isopropylmalate. Its pathway is amino-acid biosynthesis; L-leucine biosynthesis; L-leucine from 3-methyl-2-oxobutanoate: step 2/4. In terms of biological role, catalyzes the isomerization between 2-isopropylmalate and 3-isopropylmalate, via the formation of 2-isopropylmaleate. This Neisseria meningitidis serogroup C (strain 053442) protein is 3-isopropylmalate dehydratase small subunit.